The following is a 236-amino-acid chain: 2,3,4,5-tetrahydropyridine-2,6-dicarboxylate N-acetyltransferase (236 aa).

Belongs to the transferase hexapeptide repeat family. DapH subfamily.

The catalysed reaction is (S)-2,3,4,5-tetrahydrodipicolinate + acetyl-CoA + H2O = L-2-acetamido-6-oxoheptanedioate + CoA. Its pathway is amino-acid biosynthesis; L-lysine biosynthesis via DAP pathway; LL-2,6-diaminopimelate from (S)-tetrahydrodipicolinate (acetylase route): step 1/3. Functionally, catalyzes the transfer of an acetyl group from acetyl-CoA to tetrahydrodipicolinate. This chain is 2,3,4,5-tetrahydropyridine-2,6-dicarboxylate N-acetyltransferase, found in Limosilactobacillus reuteri (strain DSM 20016) (Lactobacillus reuteri).